Reading from the N-terminus, the 378-residue chain is H repeat-associated putative transposase YhhI (378 aa).

This sequence belongs to the transposase 11 family.

This Escherichia coli (strain K12) protein is H repeat-associated putative transposase YhhI (yhhI).